The chain runs to 221 residues: Small ribosomal subunit protein uS2 (221 aa).

The protein belongs to the universal ribosomal protein uS2 family.

This Methanococcus maripaludis (strain C6 / ATCC BAA-1332) protein is Small ribosomal subunit protein uS2.